The primary structure comprises 208 residues: MKPLTARQQEVFDLIKAKIDDTGMPPTRAEIARELGFRSANAAEEHLKALARKQVIEIIPGASRGIRILLQDADHHDEELGVPLIGQVAAGEPILAQEHVESHYKVDPGMFKPQADFLLRVNGESMKDIGIMDGDLLAVHKTQDVRDGQVVVARVDDDVTVKRLERKGSMVFLHAENEEFSPIEVDLTSQSLSIEGLAVGVIRSTTWM.

A DNA-binding region (H-T-H motif) is located at residues 28–48 (RAEIARELGFRSANAAEEHLK). Active-site for autocatalytic cleavage activity residues include Ser125 and Lys162.

The protein belongs to the peptidase S24 family. Homodimer.

It catalyses the reaction Hydrolysis of Ala-|-Gly bond in repressor LexA.. Represses a number of genes involved in the response to DNA damage (SOS response), including recA and lexA. In the presence of single-stranded DNA, RecA interacts with LexA causing an autocatalytic cleavage which disrupts the DNA-binding part of LexA, leading to derepression of the SOS regulon and eventually DNA repair. The sequence is that of LexA repressor from Aliivibrio fischeri (strain ATCC 700601 / ES114) (Vibrio fischeri).